The sequence spans 326 residues: Tagatose 1,6-diphosphate aldolase (326 aa).

Belongs to the aldolase LacD family.

It catalyses the reaction D-tagatofuranose 1,6-bisphosphate = D-glyceraldehyde 3-phosphate + dihydroxyacetone phosphate. It functions in the pathway carbohydrate metabolism; D-tagatose 6-phosphate degradation; D-glyceraldehyde 3-phosphate and glycerone phosphate from D-tagatose 6-phosphate: step 2/2. In Staphylococcus aureus (strain MW2), this protein is Tagatose 1,6-diphosphate aldolase.